The following is a 286-amino-acid chain: MSAEILDGKSLALKIKEELKKEVQDLKNQGINPCLAVVLVGENKSSQKYVSFKEKTCKELDIQSLVFKLPENTEETSLIKLIDELNENSQVNGILIQLPLPKHLNQNKVLERINPFKDVDGFTPFCLGRLLIDSPLFIPCTPKGIIRMLDEYKINLEGKQAVVIGRSIIVGKPLSLLLLKRNATVTMCHSKTINLQDITKKADILCVAIGREKFITSNMIKKGAVVIDIGINVTASGKVVGDVNFDDVKEKASYITPVPGGVGPMTIAMLMENAIYAAKLQKRVVK.

NADP(+)-binding positions include 165-167 (GRS), S190, and I231.

The protein belongs to the tetrahydrofolate dehydrogenase/cyclohydrolase family. As to quaternary structure, homodimer.

The enzyme catalyses (6R)-5,10-methylene-5,6,7,8-tetrahydrofolate + NADP(+) = (6R)-5,10-methenyltetrahydrofolate + NADPH. The catalysed reaction is (6R)-5,10-methenyltetrahydrofolate + H2O = (6R)-10-formyltetrahydrofolate + H(+). Its pathway is one-carbon metabolism; tetrahydrofolate interconversion. Functionally, catalyzes the oxidation of 5,10-methylenetetrahydrofolate to 5,10-methenyltetrahydrofolate and then the hydrolysis of 5,10-methenyltetrahydrofolate to 10-formyltetrahydrofolate. The sequence is that of Bifunctional protein FolD from Thermodesulfovibrio yellowstonii (strain ATCC 51303 / DSM 11347 / YP87).